The chain runs to 730 residues: PWWP domain-containing protein 2A (730 aa).

A compositionally biased stretch (low complexity) spans 1-15 (MAAVAAEAAATAASP). Residues 1-134 (MAAVAAEAAA…PPAGGDSAVS (134 aa)) are disordered. A compositionally biased stretch (pro residues) spans 66-77 (PLPPPPPPPPPG). Phosphoserine is present on residues serine 82 and serine 99. The span at 91 to 108 (PEPAAVPVSPPEQPPAAP) shows a compositional bias: pro residues. The interaction with HDAC1 and MTA1 stretch occupies residues 128–346 (GGDSAVSHLI…KLKTDHKVDG (219 aa)). A Glycyl lysine isopeptide (Lys-Gly) (interchain with G-Cter in SUMO2) cross-link involves residue lysine 188. Disordered regions lie at residues 257–276 (YNQS…KRKM), 311–355 (IRKG…SQRR), and 409–531 (KEKA…LGKK). The segment covering 267-276 (RKIKRPKRKM) has biased composition (basic residues). Basic and acidic residues-rich tracts occupy residues 311-329 (IRKG…RRND) and 341-354 (DHKV…ESQR). The interval 396-547 (MDHAKAREVL…SVYLTLNQET (152 aa)) is interaction with the H2A.Z/H2AZ1. The span at 488 to 501 (SAGEAPSEKPSPSE) shows a compositional bias: low complexity. Residues 512–527 (DTSRVRVPGEQEELRM) are compositionally biased toward basic and acidic residues. In terms of domain architecture, PWWP spans 630–690 (VGDIVWAKIY…LSQLSPFLEN (61 aa)).

Component of a MTA1-specific subcomplex of the NuRD complex (M1HR), which is composed of PWWP2A, MTA1/2, HDAC1/2, and RBBP4/7 but does not contain CHD4 and MBD3. Interacts with MTA1; the interaction mediates the association of PWWP2A with the M1HR complex. Interacts with H2A.Z/H2AZ1. Interacts (via PWWP domain) with histone H3 trimethylated at 'Lys-36' (H3K36me3). Does not interact with CHD4 and MBD3.

The protein localises to the nucleus. Chromatin-binding protein that acts as an adapter between distinct nucleosome components (H3K36me3 or H2A.Z) and chromatin-modifying complexes, contributing to the regulation of the levels of histone acetylation at actively transcribed genes. Competes with CHD4 and MBD3 for interaction with MTA1 to form a NuRD subcomplex, preventing the formation of full NuRD complex (containing CHD4 and MBD3), leading to recruitment of HDACs to gene promoters resulting in turn in the deacetylation of nearby H3K27 and H2A.Z. Plays a role in facilitating transcriptional elongation and repression of spurious transcription initiation through regulation of histone acetylation. Essential for proper mitosis progression. The sequence is that of PWWP domain-containing protein 2A (Pwwp2a) from Mus musculus (Mouse).